We begin with the raw amino-acid sequence, 430 residues long: Serine--tRNA ligase (430 aa).

Residue 237–239 coordinates L-serine; it reads TAE. 268–270 contributes to the ATP binding site; sequence RSE. Residue E291 coordinates L-serine. 355-358 contributes to the ATP binding site; sequence EISS. Residue S391 coordinates L-serine.

The protein belongs to the class-II aminoacyl-tRNA synthetase family. Type-1 seryl-tRNA synthetase subfamily. As to quaternary structure, homodimer. The tRNA molecule binds across the dimer.

The protein resides in the cytoplasm. The enzyme catalyses tRNA(Ser) + L-serine + ATP = L-seryl-tRNA(Ser) + AMP + diphosphate + H(+). It catalyses the reaction tRNA(Sec) + L-serine + ATP = L-seryl-tRNA(Sec) + AMP + diphosphate + H(+). The protein operates within aminoacyl-tRNA biosynthesis; selenocysteinyl-tRNA(Sec) biosynthesis; L-seryl-tRNA(Sec) from L-serine and tRNA(Sec): step 1/1. In terms of biological role, catalyzes the attachment of serine to tRNA(Ser). Is also able to aminoacylate tRNA(Sec) with serine, to form the misacylated tRNA L-seryl-tRNA(Sec), which will be further converted into selenocysteinyl-tRNA(Sec). In Escherichia coli O139:H28 (strain E24377A / ETEC), this protein is Serine--tRNA ligase.